A 298-amino-acid chain; its full sequence is Protoheme IX farnesyltransferase (298 aa).

Helical transmembrane passes span 16 to 36 (VVAL…PDMP), 45 to 65 (ALGF…NQLL), 93 to 113 (VFAG…VNVI), 114 to 134 (TAVL…VYLK), 141 to 161 (IVIG…AVTG), 172 to 192 (SLLV…LAIF), 218 to 238 (ILVY…VGMS), 241 to 261 (FYLG…WRML), and 277 to 297 (IVYL…LPWV).

Belongs to the UbiA prenyltransferase family. Protoheme IX farnesyltransferase subfamily.

Its subcellular location is the cell inner membrane. The catalysed reaction is heme b + (2E,6E)-farnesyl diphosphate + H2O = Fe(II)-heme o + diphosphate. It functions in the pathway porphyrin-containing compound metabolism; heme O biosynthesis; heme O from protoheme: step 1/1. Functionally, converts heme B (protoheme IX) to heme O by substitution of the vinyl group on carbon 2 of heme B porphyrin ring with a hydroxyethyl farnesyl side group. The chain is Protoheme IX farnesyltransferase from Xanthomonas axonopodis pv. citri (strain 306).